We begin with the raw amino-acid sequence, 375 residues long: Holliday junction branch migration complex subunit RuvB (375 aa).

Residues 1–22 (MAIVSSKQSPQPDGSKKPSQAK) show a composition bias toward polar residues. Residues 1 to 44 (MAIVSSKQSPQPDGSKKPSQAKSVKKSVEHSKPQQTDALLQPEA) form a disordered region. The interval 13 to 218 (DGSKKPSQAK…FGFVQRLRFY (206 aa)) is large ATPase domain (RuvB-L). ATP-binding positions include leucine 57, arginine 58, glycine 99, lysine 102, threonine 103, threonine 104, 165–167 (EDF), arginine 208, tyrosine 218, and arginine 255. Residue threonine 103 participates in Mg(2+) binding. The interval 219-289 (EADELGQIVL…IAQEALELFN (71 aa)) is small ATPAse domain (RuvB-S). The segment at 292 to 375 (PCGLDWTDRR…PPDEQMRLLS (84 aa)) is head domain (RuvB-H). DNA contacts are provided by arginine 347 and arginine 352.

This sequence belongs to the RuvB family. As to quaternary structure, homohexamer. Forms an RuvA(8)-RuvB(12)-Holliday junction (HJ) complex. HJ DNA is sandwiched between 2 RuvA tetramers; dsDNA enters through RuvA and exits via RuvB. An RuvB hexamer assembles on each DNA strand where it exits the tetramer. Each RuvB hexamer is contacted by two RuvA subunits (via domain III) on 2 adjacent RuvB subunits; this complex drives branch migration. In the full resolvosome a probable DNA-RuvA(4)-RuvB(12)-RuvC(2) complex forms which resolves the HJ.

The protein localises to the cytoplasm. The catalysed reaction is ATP + H2O = ADP + phosphate + H(+). Its function is as follows. The RuvA-RuvB-RuvC complex processes Holliday junction (HJ) DNA during genetic recombination and DNA repair, while the RuvA-RuvB complex plays an important role in the rescue of blocked DNA replication forks via replication fork reversal (RFR). RuvA specifically binds to HJ cruciform DNA, conferring on it an open structure. The RuvB hexamer acts as an ATP-dependent pump, pulling dsDNA into and through the RuvAB complex. RuvB forms 2 homohexamers on either side of HJ DNA bound by 1 or 2 RuvA tetramers; 4 subunits per hexamer contact DNA at a time. Coordinated motions by a converter formed by DNA-disengaged RuvB subunits stimulates ATP hydrolysis and nucleotide exchange. Immobilization of the converter enables RuvB to convert the ATP-contained energy into a lever motion, pulling 2 nucleotides of DNA out of the RuvA tetramer per ATP hydrolyzed, thus driving DNA branch migration. The RuvB motors rotate together with the DNA substrate, which together with the progressing nucleotide cycle form the mechanistic basis for DNA recombination by continuous HJ branch migration. Branch migration allows RuvC to scan DNA until it finds its consensus sequence, where it cleaves and resolves cruciform DNA. The chain is Holliday junction branch migration complex subunit RuvB from Acaryochloris marina (strain MBIC 11017).